We begin with the raw amino-acid sequence, 155 residues long: MSDKSESYKVITDNRQARYLYEILETFEAGIQLTGTEVKSIRAGKVNLQDGYALLRDGEIWLINAHISPYNASGQYFNHEPRRTRKLLLHRQEIRKLIGKVEQQGLTLVPLKMYLKRGWVKVSIALGKGKKLHDKRESLKRRQDQRDMQRAMKNY.

Residues 136–155 (RESLKRRQDQRDMQRAMKNY) are disordered.

The protein belongs to the SmpB family.

The protein resides in the cytoplasm. In terms of biological role, required for rescue of stalled ribosomes mediated by trans-translation. Binds to transfer-messenger RNA (tmRNA), required for stable association of tmRNA with ribosomes. tmRNA and SmpB together mimic tRNA shape, replacing the anticodon stem-loop with SmpB. tmRNA is encoded by the ssrA gene; the 2 termini fold to resemble tRNA(Ala) and it encodes a 'tag peptide', a short internal open reading frame. During trans-translation Ala-aminoacylated tmRNA acts like a tRNA, entering the A-site of stalled ribosomes, displacing the stalled mRNA. The ribosome then switches to translate the ORF on the tmRNA; the nascent peptide is terminated with the 'tag peptide' encoded by the tmRNA and targeted for degradation. The ribosome is freed to recommence translation, which seems to be the essential function of trans-translation. This is SsrA-binding protein from Nostoc sp. (strain PCC 7120 / SAG 25.82 / UTEX 2576).